Reading from the N-terminus, the 292-residue chain is Ribosomal protein L11 methyltransferase (292 aa).

Residues Thr-144, Gly-165, Asp-187, and Asn-229 each coordinate S-adenosyl-L-methionine.

This sequence belongs to the methyltransferase superfamily. PrmA family.

Its subcellular location is the cytoplasm. It catalyses the reaction L-lysyl-[protein] + 3 S-adenosyl-L-methionine = N(6),N(6),N(6)-trimethyl-L-lysyl-[protein] + 3 S-adenosyl-L-homocysteine + 3 H(+). Methylates ribosomal protein L11. The polypeptide is Ribosomal protein L11 methyltransferase (Pseudomonas savastanoi pv. phaseolicola (strain 1448A / Race 6) (Pseudomonas syringae pv. phaseolicola (strain 1448A / Race 6))).